Consider the following 369-residue polypeptide: Queuine tRNA-ribosyltransferase (369 aa).

The Proton acceptor role is filled by D89. Substrate-binding positions include 89–93 (DSGGF), D142, Q184, and G211. Residues 242 to 248 (GGGSPEL) form an RNA binding region. The active-site Nucleophile is the D261. The RNA binding; important for wobble base 34 recognition stretch occupies residues 266-270 (TRIAR). 4 residues coordinate Zn(2+): C299, C301, C304, and H330.

Belongs to the queuine tRNA-ribosyltransferase family. As to quaternary structure, homodimer. Within each dimer, one monomer is responsible for RNA recognition and catalysis, while the other monomer binds to the replacement base PreQ1. Zn(2+) serves as cofactor.

It catalyses the reaction 7-aminomethyl-7-carbaguanine + guanosine(34) in tRNA = 7-aminomethyl-7-carbaguanosine(34) in tRNA + guanine. The protein operates within tRNA modification; tRNA-queuosine biosynthesis. In terms of biological role, catalyzes the base-exchange of a guanine (G) residue with the queuine precursor 7-aminomethyl-7-deazaguanine (PreQ1) at position 34 (anticodon wobble position) in tRNAs with GU(N) anticodons (tRNA-Asp, -Asn, -His and -Tyr). Catalysis occurs through a double-displacement mechanism. The nucleophile active site attacks the C1' of nucleotide 34 to detach the guanine base from the RNA, forming a covalent enzyme-RNA intermediate. The proton acceptor active site deprotonates the incoming PreQ1, allowing a nucleophilic attack on the C1' of the ribose to form the product. After dissociation, two additional enzymatic reactions on the tRNA convert PreQ1 to queuine (Q), resulting in the hypermodified nucleoside queuosine (7-(((4,5-cis-dihydroxy-2-cyclopenten-1-yl)amino)methyl)-7-deazaguanosine). This is Queuine tRNA-ribosyltransferase from Thermotoga maritima (strain ATCC 43589 / DSM 3109 / JCM 10099 / NBRC 100826 / MSB8).